The following is a 662-amino-acid chain: Methyl-accepting chemotaxis protein TlpA (662 aa).

At 1 to 16 (MKKTLTTIRRSSIARR) the chain is on the cytoplasmic side. A helical membrane pass occupies residues 17-37 (LIISFLLILIVPITALSVSAY). Topologically, residues 38-281 (QSAVASLDVQ…IHDAASRVLI (244 aa)) are extracellular. In terms of domain architecture, Cache spans 152–228 (VTEPYESISS…KAGTELKGDW (77 aa)). Residues 282 to 302 (MASIVLAIAIGAGMTAIYFVI) form a helical membrane-spanning segment. The HAMP domain maps to 303–355 (RSITKPLRRIVASAEKISEGDLTETIEINSKDELGVLSESFNHMAHSLRSLIH). Topologically, residues 303-662 (RSITKPLRRI…DLTKQFKVDK (360 aa)) are cytoplasmic. 4 positions are modified to glutamate methyl ester (Glu): glutamate 370, glutamate 594, glutamate 629, and glutamate 636. The Methyl-accepting transducer domain maps to 374 to 610 (SADQTSRATE…EISAASNDIT (237 aa)).

This sequence belongs to the methyl-accepting chemotaxis (MCP) protein family. In terms of assembly, interacts with YabA.

Its subcellular location is the cell membrane. Chemotactic-signal transducers respond to changes in the concentration of attractants and repellents in the environment, transduce a signal from the outside to the inside of the cell, and facilitate sensory adaptation through the variation of the level of methylation. All amino acids serve as attractants in B.subtilis, they appear to cause an increase in the turnover methyl groups, leading to methylation of an unidentified acceptor, while repellents have been shown to cause a decrease in methyl group turnover. The methyl groups are added by a methyltransferase and removed by a methylesterase. This is Methyl-accepting chemotaxis protein TlpA from Bacillus subtilis (strain 168).